A 184-amino-acid polypeptide reads, in one-letter code: MARYGATSTNPAKSASARGSYLRVSFKNTRETAQAINGWELTKAQKYLEQVLDHQRAIPFRRFNSSIGRTAQGKEFGVTKARWPAKSVKFVQGLLQNAAANAEAKGLDATKLYVSHIQVNQAPKQRRRTYRAHGRINKYESSPSHIELVVTEKEEAVAKAAEKKVVRLTSRQRGRIAAQKRIAA.

Residue K46 forms a Glycyl lysine isopeptide (Lys-Gly) (interchain with G-Cter in ubiquitin) linkage. A Phosphothreonine modification is found at T70.

Belongs to the universal ribosomal protein uL22 family. As to quaternary structure, component of the large ribosomal subunit (LSU). Mature yeast ribosomes consist of a small (40S) and a large (60S) subunit. The 40S small subunit contains 1 molecule of ribosomal RNA (18S rRNA) and 33 different proteins (encoded by 57 genes). The large 60S subunit contains 3 rRNA molecules (25S, 5.8S and 5S rRNA) and 46 different proteins (encoded by 81 genes). uL22 is associated with the polypeptide exit tunnel.

The protein resides in the cytoplasm. In terms of biological role, component of the ribosome, a large ribonucleoprotein complex responsible for the synthesis of proteins in the cell. The small ribosomal subunit (SSU) binds messenger RNAs (mRNAs) and translates the encoded message by selecting cognate aminoacyl-transfer RNA (tRNA) molecules. The large subunit (LSU) contains the ribosomal catalytic site termed the peptidyl transferase center (PTC), which catalyzes the formation of peptide bonds, thereby polymerizing the amino acids delivered by tRNAs into a polypeptide chain. The nascent polypeptides leave the ribosome through a tunnel in the LSU and interact with protein factors that function in enzymatic processing, targeting, and the membrane insertion of nascent chains at the exit of the ribosomal tunnel. The sequence is that of Large ribosomal subunit protein uL22A from Saccharomyces cerevisiae (strain ATCC 204508 / S288c) (Baker's yeast).